The chain runs to 303 residues: Probable RuBisCO transcriptional regulator (303 aa).

One can recognise an HTH lysR-type domain in the interval 6-63 (FTLDQLRIFQAIVVEGSFQKAAQSLYISQPAVSLQIQNLEQQLNAPLFDRSHRKAKLT). The H-T-H motif DNA-binding region spans 23–42 (FQKAAQSLYISQPAVSLQIQ).

The protein belongs to the LysR transcriptional regulatory family.

It is found in the plastid. The protein resides in the chloroplast. Trans-acting transcriptional regulator of RuBisCO genes (rbcL and rbcS) expression. This is Probable RuBisCO transcriptional regulator (rbcR) from Cyanidioschyzon merolae (strain NIES-3377 / 10D) (Unicellular red alga).